A 234-amino-acid polypeptide reads, in one-letter code: Large ribosomal subunit protein uL1 (234 aa).

This sequence belongs to the universal ribosomal protein uL1 family. As to quaternary structure, part of the 50S ribosomal subunit.

In terms of biological role, binds directly to 23S rRNA. The L1 stalk is quite mobile in the ribosome, and is involved in E site tRNA release. Its function is as follows. Protein L1 is also a translational repressor protein, it controls the translation of the L11 operon by binding to its mRNA. The protein is Large ribosomal subunit protein uL1 of Helicobacter pylori (strain G27).